A 118-amino-acid chain; its full sequence is Large ribosomal subunit protein bL19 (118 aa).

The protein belongs to the bacterial ribosomal protein bL19 family.

Functionally, this protein is located at the 30S-50S ribosomal subunit interface and may play a role in the structure and function of the aminoacyl-tRNA binding site. In Geobacter metallireducens (strain ATCC 53774 / DSM 7210 / GS-15), this protein is Large ribosomal subunit protein bL19.